The chain runs to 189 residues: Peptidyl-tRNA hydrolase (189 aa).

Tyrosine 16 contacts tRNA. Histidine 21 serves as the catalytic Proton acceptor. Phenylalanine 67, asparagine 69, and asparagine 115 together coordinate tRNA.

It belongs to the PTH family. Monomer.

The protein resides in the cytoplasm. The enzyme catalyses an N-acyl-L-alpha-aminoacyl-tRNA + H2O = an N-acyl-L-amino acid + a tRNA + H(+). Functionally, hydrolyzes ribosome-free peptidyl-tRNAs (with 1 or more amino acids incorporated), which drop off the ribosome during protein synthesis, or as a result of ribosome stalling. Its function is as follows. Catalyzes the release of premature peptidyl moieties from peptidyl-tRNA molecules trapped in stalled 50S ribosomal subunits, and thus maintains levels of free tRNAs and 50S ribosomes. This Legionella pneumophila (strain Lens) protein is Peptidyl-tRNA hydrolase.